We begin with the raw amino-acid sequence, 717 residues long: DNA polymerase iota (717 aa).

The disordered stretch occupies residues 1–22 (MEPLHAGAAGSSRAVCSQGPPT). One can recognise a UmuC domain in the interval 30–243 (IVHVDLDCFY…NHIKEIPGIG (214 aa)). Mg(2+)-binding residues include D34 and L35. A 2'-deoxyribonucleoside 5'-triphosphate is bound by residues Y39 and R71. D126 contacts Mg(2+). The active-site Proton acceptor is the E127. 2 DNA-binding regions span residues 300 to 307 (QSFSEEDT) and 343 to 360 (RLVI…ESRQ). Positions 500–517 (VDQEVFKQLPADIQEEIL) match the Ubiquitin-binding 1 (UBM1) motif. Disordered stretches follow at residues 549–589 (QMQA…SHPS), 603–622 (KDEQ…FSST), and 644–687 (HRTV…DIDP). Residues 575 to 589 (PGTSGLSPGSTSHPS) are compositionally biased toward low complexity. Composition is skewed to polar residues over residues 607 to 622 (TSQG…FSST) and 652 to 662 (QTATASHQGLE). Residues 665–679 (QGLESRELDSAEEKL) show a composition bias toward basic and acidic residues. The Ubiquitin-binding 2 (UBM2) motif lies at 685 to 702 (IDPQVFYELPEEVQKELM).

This sequence belongs to the DNA polymerase type-Y family. As to quaternary structure, interacts with POLH. Interacts with REV1. Interacts with ubiquitin. Mg(2+) serves as cofactor. Mn(2+) is required as a cofactor. Post-translationally, monoubiquitinated. Protein monoubiquitination prevents POLI binding to ubiquitin via the ubiquitin-binding motif 1 and ubiquitin-binding motif 2. In terms of tissue distribution, detected in testis, and at very low levels in spleen, lung and brain. Detected in round spermatids, but not in prophase spermatocytes.

The protein resides in the nucleus. It carries out the reaction DNA(n) + a 2'-deoxyribonucleoside 5'-triphosphate = DNA(n+1) + diphosphate. Error-prone DNA polymerase specifically involved in DNA repair. Plays an important role in translesion synthesis, where the normal high-fidelity DNA polymerases cannot proceed and DNA synthesis stalls. Favors Hoogsteen base-pairing in the active site. Inserts the correct base with high-fidelity opposite an adenosine template. Exhibits low fidelity and efficiency opposite a thymidine template, where it will preferentially insert guanosine. May play a role in hypermutation of immunoglobulin genes. Forms a Schiff base with 5'-deoxyribose phosphate at abasic sites, but may not have lyase activity. This is DNA polymerase iota (Poli) from Mus musculus (Mouse).